The sequence spans 178 residues: Large ribosomal subunit protein uL10 (178 aa).

This sequence belongs to the universal ribosomal protein uL10 family. Part of the ribosomal stalk of the 50S ribosomal subunit. The N-terminus interacts with L11 and the large rRNA to form the base of the stalk. The C-terminus forms an elongated spine to which L12 dimers bind in a sequential fashion forming a multimeric L10(L12)X complex.

In terms of biological role, forms part of the ribosomal stalk, playing a central role in the interaction of the ribosome with GTP-bound translation factors. In Petrotoga mobilis (strain DSM 10674 / SJ95), this protein is Large ribosomal subunit protein uL10.